The following is a 251-amino-acid chain: ATP synthase subunit a (251 aa).

7 helical membrane passes run 29 to 49 (FTQSALYMFAAVGIIALITLV), 56 to 73 (LVPGRMQSLAEAFYEFIA), 87 to 107 (FVPLVFSLFMFVLVLNLFGMI), 117 to 137 (IIVTFMLALVVILTVVIYGFM), 159 to 181 (LIVAIEVVSFISRPISLSVRLFA), 192 to 212 (IFAGFVPALLAAGIWGILSPL), and 218 to 238 (VAITALEMLVAVLQAYVFATL).

This sequence belongs to the ATPase A chain family. In terms of assembly, F-type ATPases have 2 components, CF(1) - the catalytic core - and CF(0) - the membrane proton channel. CF(1) has five subunits: alpha(3), beta(3), gamma(1), delta(1), epsilon(1). CF(0) has three main subunits: a(1), b(2) and c(9-12). The alpha and beta chains form an alternating ring which encloses part of the gamma chain. CF(1) is attached to CF(0) by a central stalk formed by the gamma and epsilon chains, while a peripheral stalk is formed by the delta and b chains.

The protein localises to the cell inner membrane. Key component of the proton channel; it plays a direct role in the translocation of protons across the membrane. The sequence is that of ATP synthase subunit a from Methylobacterium sp. (strain 4-46).